A 288-amino-acid polypeptide reads, in one-letter code: Lysosomal thioesterase PPT2 homolog (288 aa).

The N-terminal stretch at M1–A22 is a signal peptide. S98 (nucleophile) is an active-site residue. N192 is a glycosylation site (N-linked (GlcNAc...) asparagine). Active-site residues include D214 and H269.

The protein belongs to the palmitoyl-protein thioesterase family. Expressed in adult head and crop.

The protein resides in the lysosome. The enzyme catalyses hexadecanoyl-CoA + H2O = hexadecanoate + CoA + H(+). The catalysed reaction is S-hexadecanoyl-N-acetylcysteamine + H2O = N-acetylcysteamine + hexadecanoate + H(+). In terms of biological role, catalyzes the cleavage of thioester bonds from S-palmitoyl-CoA or S-palmitoyl-N-acetylcysteamine (unbranched structures) but does not have activity against palmitoylcysteine or palmitoylated proteins, branched structures or bulky head groups. Conversely, hydrolyzes both long and short chain fatty acyl-CoA substrate. The protein is Lysosomal thioesterase PPT2 homolog (Ppt2) of Drosophila melanogaster (Fruit fly).